The following is a 398-amino-acid chain: 4-hydroxy-3-methylbut-2-enyl diphosphate reductase (398 aa).

Cys66 provides a ligand contact to [4Fe-4S] cluster. Position 96 (His96) interacts with (2E)-4-hydroxy-3-methylbut-2-enyl diphosphate. His96 is a binding site for dimethylallyl diphosphate. An isopentenyl diphosphate-binding site is contributed by His96. Cys157 is a binding site for [4Fe-4S] cluster. His185 contributes to the (2E)-4-hydroxy-3-methylbut-2-enyl diphosphate binding site. A dimethylallyl diphosphate-binding site is contributed by His185. Isopentenyl diphosphate is bound at residue His185. Residue Glu187 is the Proton donor of the active site. Thr250 serves as a coordination point for (2E)-4-hydroxy-3-methylbut-2-enyl diphosphate. Cys288 provides a ligand contact to [4Fe-4S] cluster. Positions 317, 318, 319, and 379 each coordinate (2E)-4-hydroxy-3-methylbut-2-enyl diphosphate. Residues Ser317, Ser318, Asn319, and Ser379 each contribute to the dimethylallyl diphosphate site. 4 residues coordinate isopentenyl diphosphate: Ser317, Ser318, Asn319, and Ser379.

Belongs to the IspH family. [4Fe-4S] cluster is required as a cofactor.

The catalysed reaction is isopentenyl diphosphate + 2 oxidized [2Fe-2S]-[ferredoxin] + H2O = (2E)-4-hydroxy-3-methylbut-2-enyl diphosphate + 2 reduced [2Fe-2S]-[ferredoxin] + 2 H(+). It catalyses the reaction dimethylallyl diphosphate + 2 oxidized [2Fe-2S]-[ferredoxin] + H2O = (2E)-4-hydroxy-3-methylbut-2-enyl diphosphate + 2 reduced [2Fe-2S]-[ferredoxin] + 2 H(+). It participates in isoprenoid biosynthesis; dimethylallyl diphosphate biosynthesis; dimethylallyl diphosphate from (2E)-4-hydroxy-3-methylbutenyl diphosphate: step 1/1. It functions in the pathway isoprenoid biosynthesis; isopentenyl diphosphate biosynthesis via DXP pathway; isopentenyl diphosphate from 1-deoxy-D-xylulose 5-phosphate: step 6/6. Catalyzes the conversion of 1-hydroxy-2-methyl-2-(E)-butenyl 4-diphosphate (HMBPP) into a mixture of isopentenyl diphosphate (IPP) and dimethylallyl diphosphate (DMAPP). Acts in the terminal step of the DOXP/MEP pathway for isoprenoid precursor biosynthesis. In Prochlorococcus marinus (strain MIT 9313), this protein is 4-hydroxy-3-methylbut-2-enyl diphosphate reductase.